We begin with the raw amino-acid sequence, 522 residues long: Sulfite reductase [NADPH] flavoprotein alpha-component (522 aa).

Residues 60–198 (ITILFGSQTG…DTERWSSDAL (139 aa)) enclose the Flavodoxin-like domain. The interval 217 to 242 (TLRSHQDLRSHQEQSRNRARPYDKDN) is disordered. Residues 220–242 (SHQDLRSHQEQSRNRARPYDKDN) are compositionally biased toward basic and acidic residues. The region spanning 241 to 399 (DNPYTATLLE…VAPYRAFLQQ (159 aa)) is the FAD-binding FR-type domain.

As to quaternary structure, alpha(8)-beta(8). The alpha component is a flavoprotein, the beta component is a hemoprotein. FAD serves as cofactor. It depends on FMN as a cofactor.

It carries out the reaction hydrogen sulfide + 3 NADP(+) + 3 H2O = sulfite + 3 NADPH + 4 H(+). In terms of biological role, catalyzes the 6-electron reduction of sulfite to sulfide. This is one of several activities required for the biosynthesis of L-cysteine from sulfate. The flavo-protein component catalyzes the electron flow from NADPH -&gt; FAD -&gt; FMN to the hemoprotein component. This Thiocapsa roseopersicina protein is Sulfite reductase [NADPH] flavoprotein alpha-component (cysJ).